Reading from the N-terminus, the 266-residue chain is Undecaprenyl-diphosphatase (266 aa).

8 helical membrane passes run Trp4 to Ser24, Gly41 to Phe61, Phe80 to Asp100, Val105 to Leu125, Ala139 to Ile159, Ala182 to Leu202, Asp212 to Val232, and Ala245 to Ile265.

It belongs to the UppP family.

It is found in the cell inner membrane. It carries out the reaction di-trans,octa-cis-undecaprenyl diphosphate + H2O = di-trans,octa-cis-undecaprenyl phosphate + phosphate + H(+). Functionally, catalyzes the dephosphorylation of undecaprenyl diphosphate (UPP). Confers resistance to bacitracin. The chain is Undecaprenyl-diphosphatase from Phenylobacterium zucineum (strain HLK1).